Consider the following 380-residue polypeptide: Transcription factor RF2a (380 aa).

Residues 1–57 (MNREKSPIPGDGGDGLPPQATRRAGPPAAAAAAEYDISRMPDFPTRNPGHRRAHSEI) form a disordered region. Positions 16 to 33 (LPPQATRRAGPPAAAAAA) are enriched in low complexity. Residues 56–108 (EILSLPEDLDLCAAGGGDGPSLSDENDEELFSMFLDVEKLNSTCGASSEAEAE) form an activation of RTBV promoter region. A bZIP domain is found at 181 to 244 (DPKRAKRIWA…SGLTTENSEL (64 aa)). The tract at residues 183 to 204 (KRAKRIWANRQSAARSKERKMR) is basic motif. Residues 209 to 244 (LERKVQTLQTEATTLSAQLALLQRDTSGLTTENSEL) form a leucine-zipper region. An interaction with TBP2 region spans residues 283-357 (GGMMMNFGGM…AQQLQQAARD (75 aa)). The span at 326-355 (QAQQQQVLHPQHQQQQPLHPLQAQQLQQAA) shows a compositional bias: low complexity. A disordered region spans residues 326-380 (QAQQQQVLHPQHQQQQPLHPLQAQQLQQAARDLKMKSPMGGQSQWGDGKSGSSGN).

It belongs to the bZIP family. As to quaternary structure, binds DNA as a homodimer or as a heterodimer with RF2b. The heterodimer binds stronger to DNA than the homodimer. Interacts with TBP2. In terms of tissue distribution, expressed at high levels in levels in leaf sheath, moderate levels in leaf blade, but not in roots. Predominantly expressed in vascular tissues.

Its subcellular location is the nucleus. Its function is as follows. Transcription factor probably involved in vascular development and shoot tissue organization. Binds to the DNA sequence 5'-CCGAGTGTGCCCCTGG-3' present in the promoter region Box II of the phloem-specific rice tungro bacilliform virus (RTBV) promoter. May regulate tissue-specific expression of the RTBV promoter and virus replication. The sequence is that of Transcription factor RF2a (RF2a) from Oryza sativa subsp. japonica (Rice).